The chain runs to 226 residues: Ribose-5-phosphate isomerase A (226 aa).

Residues 33 to 36 (TGST), 86 to 89 (DGAD), and 99 to 102 (KGGG) contribute to the substrate site. Catalysis depends on glutamate 108, which acts as the Proton acceptor. Residue lysine 126 coordinates substrate.

It belongs to the ribose 5-phosphate isomerase family. As to quaternary structure, homodimer.

It carries out the reaction aldehydo-D-ribose 5-phosphate = D-ribulose 5-phosphate. It participates in carbohydrate degradation; pentose phosphate pathway; D-ribose 5-phosphate from D-ribulose 5-phosphate (non-oxidative stage): step 1/1. Catalyzes the reversible conversion of ribose-5-phosphate to ribulose 5-phosphate. The chain is Ribose-5-phosphate isomerase A from Bordetella parapertussis (strain 12822 / ATCC BAA-587 / NCTC 13253).